We begin with the raw amino-acid sequence, 168 residues long: Endoribonuclease YbeY (168 aa).

3 residues coordinate Zn(2+): H119, H123, and H129.

The protein belongs to the endoribonuclease YbeY family. Zn(2+) is required as a cofactor.

The protein resides in the cytoplasm. In terms of biological role, single strand-specific metallo-endoribonuclease involved in late-stage 70S ribosome quality control and in maturation of the 3' terminus of the 16S rRNA. The chain is Endoribonuclease YbeY from Gluconobacter oxydans (strain 621H) (Gluconobacter suboxydans).